An 80-amino-acid polypeptide reads, in one-letter code: uncharacterized protein (80 aa).

This sequence to M.leprae U650M.

This is an uncharacterized protein from Mycobacterium bovis (strain ATCC BAA-935 / AF2122/97).